The primary structure comprises 361 residues: uncharacterized protein (361 aa).

Positions 1–28 (MSKSKFTKIIVVICIAAMFITGTSILSF) are cleaved as a signal peptide.

This is an uncharacterized protein from Ruminiclostridium cellulolyticum (strain ATCC 35319 / DSM 5812 / JCM 6584 / H10) (Clostridium cellulolyticum).